A 1007-amino-acid chain; its full sequence is Glutamate receptor ionotropic, delta-2 (1007 aa).

The N-terminal stretch at 1 to 23 (MEVFPFLLVLSVWWSRTWDSANA) is a signal peptide. Residues 24–345 (DSIIHIGAIF…NAFHKKLEDR (322 aa)) are interaction with CBLN1 homotrimer. Over 24 to 566 (DSIIHIGAIF…DMFACLAPFD (543 aa)) the chain is Extracellular. 3 disulfide bridges follow: C83/C355, C99/C131, and C298/C310. N293 carries N-linked (GlcNAc...) asparagine glycosylation. A glycan (N-linked (GlcNAc...) asparagine) is linked at N426. Residues E531, V534, and D535 each contribute to the Ca(2+) site. The chain crosses the membrane as a helical span at residues 567–587 (LSLWACIAGTVLLVGLLVYLL). Over 588–635 (NWLNPPRLQMGSMTSTTLYNSMWFVYGSFVQQGGEVPYTTLATRMMMG) the chain is Cytoplasmic. A helical membrane pass occupies residues 636–656 (AWWLFALIVISSYTANLAAFL). The Extracellular segment spans residues 657 to 830 (TITRIESSIQ…QKGGALDIKS (174 aa)). Residues N713 and N716 are each glycosylated (N-linked (GlcNAc...) asparagine). Positions 753, 755, and 757 each coordinate Ca(2+). A helical transmembrane segment spans residues 831–851 (FAGVFCILAAGIVLSCFIAML). Over 852-1007 (ETWWNKRKGS…GNDPDRGTSI (156 aa)) the chain is Cytoplasmic. S883 is subject to Phosphoserine. At T886 the chain carries Phosphothreonine. The residue at position 890 (S890) is a Phosphoserine. Residues 921-991 (DFRNTHITTT…MSSIPYQPTP (71 aa)) are interaction with AP4M1. The short motif at 1005–1007 (TSI) is the PDZ-binding element. A Phosphoserine modification is found at S1006.

It belongs to the glutamate-gated ion channel (TC 1.A.10.1) family. GRID2 subfamily. As to quaternary structure, tetramer; dimer of dimers. Interacts with EML2, MAGI2 (via PDZ domains) and AP4M1. Interacts with BECN1, GOPC, GRID2IP, SHANK1 and SHANK2. Interacts with CBLN2, but not with CBLN4. Interacts with CBLN1 (via C1q domain); the interaction is CBLN1-NRX1 complex formation-dependent; CBLN1-binding is calcium-independent; CBLN1 hexamers anchor GRID2 N-terminal domain dimers to monomeric NRXN1 isoform beta; promotes synaptogenesis and mediates the D-Serine-dependent long term depression signals and AMPA receptor endocytosis.

The protein localises to the postsynaptic cell membrane. The catalysed reaction is Ca(2+)(in) = Ca(2+)(out). It catalyses the reaction Na(+)(in) = Na(+)(out). Member of the ionotropic glutamate receptor family, which plays a crucial role in synaptic organization and signal transduction in the central nervous system. Although it shares structural features with ionotropic glutamate receptors, does not bind glutamate as a primary ligand. Promotes synaptogenesis and mediates the D-Serine-dependent long term depression signals and AMPA receptor endocytosis of cerebellar parallel fiber-Purkinje cell (PF-PC) synapses through the NRX1B-CBLN1-GRID2 triad complex. In the presence of neurexins and cerebellins, forms cation-selective channels that are proposed to be gated by glycine and D-serine. However, recent research disputes this ligand-gated cation channel activity. Cation-selective ion channel activity can be triggered by GRM1 in Purkinje cells. This chain is Glutamate receptor ionotropic, delta-2 (GRID2), found in Homo sapiens (Human).